A 371-amino-acid polypeptide reads, in one-letter code: 2-aminoethylphosphonate--pyruvate transaminase (371 aa).

At Lys-195 the chain carries N6-(pyridoxal phosphate)lysine.

Belongs to the class-V pyridoxal-phosphate-dependent aminotransferase family. PhnW subfamily. Homotetramer; however this is for an enzyme with a molecular weight of 16500, which is in disagreement with the weight of this protein. Requires pyridoxal 5'-phosphate as cofactor.

It carries out the reaction (2-aminoethyl)phosphonate + pyruvate = phosphonoacetaldehyde + L-alanine. Inhibited by phosphonic acids and very slightly inhibited by aminophosphonic acids. In terms of biological role, involved in phosphonate degradation. The protein is 2-aminoethylphosphonate--pyruvate transaminase (phnW) of Pseudomonas aeruginosa (strain ATCC 15692 / DSM 22644 / CIP 104116 / JCM 14847 / LMG 12228 / 1C / PRS 101 / PAO1).